Reading from the N-terminus, the 234-residue chain is Probable porphobilinogen deaminase (234 aa).

Belongs to the HMBS family.

The catalysed reaction is 4 porphobilinogen + H2O = hydroxymethylbilane + 4 NH4(+). Its pathway is porphyrin-containing compound metabolism; protoporphyrin-IX biosynthesis; coproporphyrinogen-III from 5-aminolevulinate: step 2/4. In terms of biological role, tetrapolymerization of the monopyrrole PBG into the hydroxymethylbilane pre-uroporphyrinogen in several discrete steps. The chain is Probable porphobilinogen deaminase (hemC) from Chlamydia pneumoniae (Chlamydophila pneumoniae).